The chain runs to 167 residues: MTAMKDIYIDKVVVHMGVGESGERLVKAEDLVKQITGQKPVRTIAKRTQPAFGIRKGAPIGCKVTLRRENAEKFITTALDIIERRLAPSQFDRTGNVSFGIEEHTDFPGMSYDPTIGIYGMDVNVVLEYKGARIARRSVERRKLPADQKVNKEEAIAFMCENYRVEV.

Belongs to the universal ribosomal protein uL5 family. In terms of assembly, part of the 50S ribosomal subunit; contacts the 5S rRNA and probably tRNA. Forms a bridge to the 30S subunit in the 70S ribosome.

In terms of biological role, this is one of the proteins that bind and probably mediate the attachment of the 5S RNA into the large ribosomal subunit, where it forms part of the central protuberance. In the 70S ribosome it contacts protein S13 of the 30S subunit (bridge B1b), connecting the 2 subunits; this bridge is implicated in subunit movement. May contact the P site tRNA; the 5S rRNA and some of its associated proteins might help stabilize positioning of ribosome-bound tRNAs. This Methanoculleus marisnigri (strain ATCC 35101 / DSM 1498 / JR1) protein is Large ribosomal subunit protein uL5.